The chain runs to 67 residues: Small ribosomal subunit protein bS21 (67 aa).

Belongs to the bacterial ribosomal protein bS21 family.

This is Small ribosomal subunit protein bS21 from Rhodospirillum centenum (strain ATCC 51521 / SW).